A 334-amino-acid chain; its full sequence is Anthranilate phosphoribosyltransferase (334 aa).

5-phospho-alpha-D-ribose 1-diphosphate-binding positions include G81, 84-85 (GD), T89, 91-94 (NIST), 109-117 (KHGSRSVSS), and A121. G81 provides a ligand contact to anthranilate. S93 is a Mg(2+) binding site. R167 is a binding site for anthranilate. 2 residues coordinate Mg(2+): D225 and E226.

Belongs to the anthranilate phosphoribosyltransferase family. As to quaternary structure, homodimer. Requires Mg(2+) as cofactor.

It carries out the reaction N-(5-phospho-beta-D-ribosyl)anthranilate + diphosphate = 5-phospho-alpha-D-ribose 1-diphosphate + anthranilate. Its pathway is amino-acid biosynthesis; L-tryptophan biosynthesis; L-tryptophan from chorismate: step 2/5. Functionally, catalyzes the transfer of the phosphoribosyl group of 5-phosphorylribose-1-pyrophosphate (PRPP) to anthranilate to yield N-(5'-phosphoribosyl)-anthranilate (PRA). The polypeptide is Anthranilate phosphoribosyltransferase (Actinobacillus pleuropneumoniae serotype 5b (strain L20)).